An 88-amino-acid polypeptide reads, in one-letter code: Cytochrome c oxidase subunit 6B2 (88 aa).

Residues 1 to 22 (MLDVEAQEPPKGKWSTPPFDPR) are disordered. The CHCH domain maps to 29 to 75 (IRNCYQNFLDYHRCLKTRTRRGKSTQPCEYYFRVYHSLCPISWVESW). The short motif at 32–42 (CYQNFLDYHRC) is the Cx9C motif element. 2 disulfides stabilise this stretch: cysteine 32–cysteine 67 and cysteine 42–cysteine 56. Positions 56–67 (CEYYFRVYHSLC) match the Cx10C motif motif.

This sequence belongs to the cytochrome c oxidase subunit 6B family. In terms of assembly, component of the cytochrome c oxidase (complex IV, CIV), a multisubunit enzyme composed of 14 subunits. The complex is composed of a catalytic core of 3 subunits MT-CO1, MT-CO2 and MT-CO3, encoded in the mitochondrial DNA, and 11 supernumerary subunits COX4I1 (or COX4I2), COX5A, COX5B, COX6A1 (or COX6A2), COX6B1 (or COX6B2), COX6C, COX7A2 (or COX7A1), COX7B, COX7C, COX8A and NDUFA4, which are encoded in the nuclear genome. The complex exists as a monomer or a dimer and forms supercomplexes (SCs) in the inner mitochondrial membrane with NADH-ubiquinone oxidoreductase (complex I, CI) and ubiquinol-cytochrome c oxidoreductase (cytochrome b-c1 complex, complex III, CIII), resulting in different assemblies (supercomplex SCI(1)III(2)IV(1) and megacomplex MCI(2)III(2)IV(2)). Testis specific. Weak expression in thymus and heart. Expressed in cancer cell lines.

The protein resides in the mitochondrion inner membrane. The protein operates within energy metabolism; oxidative phosphorylation. Component of the cytochrome c oxidase, the last enzyme in the mitochondrial electron transport chain which drives oxidative phosphorylation. The respiratory chain contains 3 multisubunit complexes succinate dehydrogenase (complex II, CII), ubiquinol-cytochrome c oxidoreductase (cytochrome b-c1 complex, complex III, CIII) and cytochrome c oxidase (complex IV, CIV), that cooperate to transfer electrons derived from NADH and succinate to molecular oxygen, creating an electrochemical gradient over the inner membrane that drives transmembrane transport and the ATP synthase. Cytochrome c oxidase is the component of the respiratory chain that catalyzes the reduction of oxygen to water. Electrons originating from reduced cytochrome c in the intermembrane space (IMS) are transferred via the dinuclear copper A center (CU(A)) of subunit 2 and heme A of subunit 1 to the active site in subunit 1, a binuclear center (BNC) formed by heme A3 and copper B (CU(B)). The BNC reduces molecular oxygen to 2 water molecules using 4 electrons from cytochrome c in the IMS and 4 protons from the mitochondrial matrix. This chain is Cytochrome c oxidase subunit 6B2 (COX6B2), found in Homo sapiens (Human).